The sequence spans 910 residues: Coatomer subunit beta'-2 (910 aa).

WD repeat units lie at residues 13–52, 55–94, 97–136, 140–180, 183–224, 227–266, 269–309, 351–393, and 461–501; these read QRSE…MVKS, VTEL…KVKV, AHTD…MCTQ, GHSH…PNFT, GHSK…CVQT, GHAH…LENT, YGLE…ASMD, TCDL…GSAL, and RIDV…SHLD. A disordered region spans residues 882–910; the sequence is ADGSTDGAVLVNGNDTEEQWGTNNEESSA. Residues 900 to 910 show a composition bias toward polar residues; that stretch reads QWGTNNEESSA.

This sequence belongs to the WD repeat COPB2 family. In terms of assembly, oligomeric complex that consists of at least the alpha, beta, beta', gamma, delta, epsilon and zeta subunits.

The protein localises to the cytoplasm. It is found in the golgi apparatus membrane. Its subcellular location is the cytoplasmic vesicle. The protein resides in the COPI-coated vesicle membrane. Its function is as follows. The coatomer is a cytosolic protein complex that binds to dilysine motifs and reversibly associates with Golgi non-clathrin-coated vesicles, which further mediate biosynthetic protein transport from the ER, via the Golgi up to the trans Golgi network. Coatomer complex is required for budding from Golgi membranes, and is essential for the retrograde Golgi-to-ER transport of dilysine-tagged proteins. The chain is Coatomer subunit beta'-2 from Oryza sativa subsp. japonica (Rice).